A 279-amino-acid polypeptide reads, in one-letter code: 3-methyl-2-oxobutanoate hydroxymethyltransferase (279 aa).

2 residues coordinate Mg(2+): Asp-44 and Asp-83. 3-methyl-2-oxobutanoate-binding positions include 44 to 45 (DS), Asp-83, and Lys-113. Glu-115 serves as a coordination point for Mg(2+). Residue Glu-182 is the Proton acceptor of the active site.

The protein belongs to the PanB family. As to quaternary structure, homodecamer; pentamer of dimers. It depends on Mg(2+) as a cofactor.

It is found in the cytoplasm. The enzyme catalyses 3-methyl-2-oxobutanoate + (6R)-5,10-methylene-5,6,7,8-tetrahydrofolate + H2O = 2-dehydropantoate + (6S)-5,6,7,8-tetrahydrofolate. It participates in cofactor biosynthesis; (R)-pantothenate biosynthesis; (R)-pantoate from 3-methyl-2-oxobutanoate: step 1/2. Functionally, catalyzes the reversible reaction in which hydroxymethyl group from 5,10-methylenetetrahydrofolate is transferred onto alpha-ketoisovalerate to form ketopantoate. The polypeptide is 3-methyl-2-oxobutanoate hydroxymethyltransferase (Dehalococcoides mccartyi (strain ATCC BAA-2100 / JCM 16839 / KCTC 5957 / BAV1)).